We begin with the raw amino-acid sequence, 561 residues long: MACPF domain-containing protein CAD1 (561 aa).

Positions 11–314 constitute an MACPF domain; the sequence is VPSSEALTTT…PPIEDLQYFL (304 aa). Positions 489 to 514 are disordered; the sequence is VASSGRLEPGGPSTSSSTEEVSGQSG. A compositionally biased stretch (polar residues) spans 500–513; the sequence is PSTSSSTEEVSGQS.

This sequence belongs to the complement C6/C7/C8/C9 (TC 1.C.39) family. As to expression, mainly expressed in the vascular system.

Negatively controls the salicylic acid (SA)-mediated pathway of programmed cell death in plant immunity. In Arabidopsis thaliana (Mouse-ear cress), this protein is MACPF domain-containing protein CAD1 (CAD1).